The following is a 1164-amino-acid chain: DNA-directed RNA polymerase 133 kDa polypeptide (1164 aa).

Belongs to the RNA polymerase beta chain family. The DNA-dependent RNA polymerase used for intermediate and late genes expression consists of eight subunits 147 kDa, 133 kDa, 35 kDa, 30 kDa, 22 kDa, 19 kDa, 18 kDa and 7 kDa totalling more than 500 kDa in mass. The same holoenzyme, with the addition of the transcription-specificity factor RAP94, is used for early gene expression.

The protein resides in the virion. The catalysed reaction is RNA(n) + a ribonucleoside 5'-triphosphate = RNA(n+1) + diphosphate. Its function is as follows. Part of the DNA-dependent RNA polymerase which catalyzes the transcription of viral DNA into RNA using the four ribonucleoside triphosphates as substrates. Responsible for the transcription of early, intermediate and late genes. DNA-dependent RNA polymerase associates with the early transcription factor (ETF), itself composed of D6 and A7, thereby allowing the early genes transcription. Late transcription, and probably also intermediate transcription, require newly synthesized RNA polymerase. In Homo sapiens (Human), this protein is DNA-directed RNA polymerase 133 kDa polypeptide (RPO132).